Reading from the N-terminus, the 369-residue chain is Maltose/maltodextrin import ATP-binding protein MalK (369 aa).

One can recognise an ABC transporter domain in the interval 4–234 (VTLHNVSKAY…PVNRFVASFI (231 aa)). 36 to 43 (GPSGCGKS) contributes to the ATP binding site.

Belongs to the ABC transporter superfamily. Maltooligosaccharide importer (TC 3.A.1.1.1) family. As to quaternary structure, the complex is composed of two ATP-binding proteins (MalK), two transmembrane proteins (MalG and MalK) and a solute-binding protein (MalE).

The protein localises to the cell inner membrane. The enzyme catalyses D-maltose(out) + ATP + H2O = D-maltose(in) + ADP + phosphate + H(+). Functionally, part of the ABC transporter complex MalEFGK involved in maltose/maltodextrin import. Responsible for energy coupling to the transport system. In Photorhabdus laumondii subsp. laumondii (strain DSM 15139 / CIP 105565 / TT01) (Photorhabdus luminescens subsp. laumondii), this protein is Maltose/maltodextrin import ATP-binding protein MalK.